Consider the following 553-residue polypeptide: Protein PNS1 (553 aa).

The span at 1–17 shows a compositional bias: pro residues; it reads MYGKSGPPPEGYVPQHP. Residues 1-49 form a disordered region; sequence MYGKSGPPPEGYVPQHPPAQGYAPHNPPPGYVHENPFQEPVPQGQEYSP. The Cytoplasmic segment spans residues 1–95; that stretch reads MYGKSGPPPE…AGNRLKFNDW (95 aa). The chain crosses the membrane as a helical span at residues 96–116; sequence PFTIIFLLTVGAFIAVAVLTL. The Extracellular portion of the chain corresponds to 117–143; it reads RGWSLSPTSNGSGIYDGDNTHTLNTNA. Asn-126 is a glycosylation site (N-linked (GlcNAc...) asparagine). A helical transmembrane segment spans residues 144–164; the sequence is AILLLISCGVAVALSVFGLVL. Over 165 to 170 the chain is Cytoplasmic; sequence AGMYTK. The chain crosses the membrane as a helical span at residues 171–191; sequence FFIYAAMILNTVVGLGTAITY. The Extracellular segment spans residues 192 to 196; it reads LVLRH. The chain crosses the membrane as a helical span at residues 197-217; sequence WSAGIVFMIFTILTAVCYWLM. Residues 218–243 lie on the Cytoplasmic side of the membrane; sequence RSRIPFSVAVLRTVMSVMKKHPQTWL. A helical transmembrane segment spans residues 244 to 264; it reads VSLLGTIVSAAFSVIFSVVLV. Residues 265-288 lie on the Extracellular side of the membrane; that stretch reads ATYIKYDPKSENGGCDVSGGSCSR. Residues 289-309 form a helical membrane-spanning segment; it reads GKLIGILVLVFFCGFYISEVI. The Cytoplasmic segment spans residues 310 to 346; it reads RNVIHCTIAGIYGCWYYFSKSDQGMPRWPAFGSLKRA. A helical transmembrane segment spans residues 347–367; sequence LTTSFGSICFGSLIVSLIQLL. Residues 368 to 385 lie on the Extracellular side of the membrane; sequence RQIIQLLRNGIISGISDS. Residues 386-406 form a helical membrane-spanning segment; that stretch reads GWMQCLWLILDAVVGVFEWMA. Topologically, residues 407–450 are cytoplasmic; sequence EYFNHYAYCFIALYGKPYLRAAKETWHMLREKGIDALINDNLIN. A helical transmembrane segment spans residues 451–471; the sequence is LALGFYTLFVGYTTALFSYLF. The Extracellular segment spans residues 472–483; it reads LRFTKPDYNSGG. Residues 484-504 form a helical membrane-spanning segment; it reads GFNAVLMAFSFLIAIQLTHVA. The Cytoplasmic portion of the chain corresponds to 505 to 553; that stretch reads TETIRSGTATFFVALGNDPEIFRVSYPQRFDEIFRAYPDVLNKLSHQHV.

It belongs to the CTL (choline transporter-like) family.

Its subcellular location is the cell membrane. Functionally, probably involved in transport through the plasma membrane. The polypeptide is Protein PNS1 (PNS1) (Eremothecium gossypii (strain ATCC 10895 / CBS 109.51 / FGSC 9923 / NRRL Y-1056) (Yeast)).